The sequence spans 419 residues: UDP-N-acetylglucosamine 1-carboxyvinyltransferase (419 aa).

Residue 22-23 participates in phosphoenolpyruvate binding; that stretch reads KN. R93 serves as a coordination point for UDP-N-acetyl-alpha-D-glucosamine. C117 functions as the Proton donor in the catalytic mechanism. Position 117 is a 2-(S-cysteinyl)pyruvic acid O-phosphothioketal (C117). 2 residues coordinate UDP-N-acetyl-alpha-D-glucosamine: D307 and I329.

The protein belongs to the EPSP synthase family. MurA subfamily.

Its subcellular location is the cytoplasm. It catalyses the reaction phosphoenolpyruvate + UDP-N-acetyl-alpha-D-glucosamine = UDP-N-acetyl-3-O-(1-carboxyvinyl)-alpha-D-glucosamine + phosphate. The protein operates within cell wall biogenesis; peptidoglycan biosynthesis. Its function is as follows. Cell wall formation. Adds enolpyruvyl to UDP-N-acetylglucosamine. In Pseudoalteromonas atlantica (strain T6c / ATCC BAA-1087), this protein is UDP-N-acetylglucosamine 1-carboxyvinyltransferase.